The primary structure comprises 1104 residues: SWI/SNF complex subunit SMARCC1 (1104 aa).

A marR-like, BRCT and chromo domains module region spans residues 27-301 (LAVYRRKDGG…PVSFRQRIST (275 aa)). Residues 37–163 (PASKFWESPD…IEKTLVQNNC (127 aa)) form the MarR-like domain. The 44-residue stretch at 167–210 (PNIYLIPDIDLKLANKLKDIIKRHQGTFTDEKSKASHHIYPYPS) folds into the BRCT; N-terminus domain. Lys-178 is covalently cross-linked (Glycyl lysine isopeptide (Lys-Gly) (interchain with G-Cter in SUMO2)). Residues 216–244 (EWLRPVMRRDKQVLVHWGFYPDSYDTWVH) enclose the Chromo domain. Positions 260–284 (KPWKVHVKWILDTDVFNEWMNEEDY) constitute a BRCT; C-terminus domain. Positions 295–445 (FRQRISTKNE…PGEDNVTEQT (151 aa)) are disordered. The span at 301–317 (TKNEEPVRSPERRDRKA) shows a compositional bias: basic and acidic residues. Phosphoserine occurs at positions 309, 327, and 329. Position 334 is a phosphothreonine (Thr-334). N6-acetyllysine is present on residues Lys-344 and Lys-345. Ser-349 bears the Phosphoserine mark. Lys-353 is modified (N6-acetyllysine). Ser-356 carries the post-translational modification Phosphoserine. Lys-358 bears the N6-acetyllysine; alternate mark. Residue Lys-358 forms a Glycyl lysine isopeptide (Lys-Gly) (interchain with G-Cter in SUMO2); alternate linkage. Thr-397 carries the phosphothreonine modification. An SWIRM domain is found at 448 to 545 (IIIPSYASWF…YQVDPESRPM (98 aa)). Residue Ser-572 is modified to Phosphoserine. Lys-591 participates in a covalent cross-link: Glycyl lysine isopeptide (Lys-Gly) (interchain with G-Cter in SUMO2). The region spanning 617-668 (SAGREWTEQETLLLLEALEMYKDDWNKVSEHVGSRTQDECILHFLRLPIEDP) is the SANT domain. Residue Lys-738 forms a Glycyl lysine isopeptide (Lys-Gly) (interchain with G-Cter in SUMO2) linkage. Residues 744–859 (ARASGKVDPT…DAGKKKVEHE (116 aa)) are disordered. Ser-775 carries the phosphoserine modification. Positions 775 to 784 (SEEEKMETDP) are enriched in acidic residues. Over residues 788–859 (QPEKAENKVE…DAGKKKVEHE (72 aa)) the composition is skewed to basic and acidic residues. Residue Lys-795 forms a Glycyl lysine isopeptide (Lys-Gly) (interchain with G-Cter in SUMO2) linkage. Residues Ser-821 and Ser-824 each carry the phosphoserine modification. Glycyl lysine isopeptide (Lys-Gly) (interchain with G-Cter in SUMO2) cross-links involve residues Lys-828 and Lys-855. The stretch at 909–945 (KLRHFEELETIMDREKEALEQQRQQLLTERQNFHMEQ) forms a coiled coil. Lys-947 is modified (N6-acetyllysine). 2 disordered regions span residues 955-1021 (QQME…PGPG) and 1041-1104 (IHPT…SATP). A compositionally biased stretch (low complexity) spans 956 to 973 (QMEQQQQHGQTPQQAHQH). Pro residues-rich tracts occupy residues 994 to 1017 (QQPPPYPLMHHQMPPPHPPQPGQI) and 1048 to 1057 (PTPPGMPPMP). The residue at position 1064 (Arg-1064) is an Asymmetric dimethylarginine. A compositionally biased stretch (pro residues) spans 1073–1104 (MYPPPPQQQQPPPPADGVPPPPAPGPPASATP).

This sequence belongs to the SMARCC family. In terms of assembly, component of the multiprotein chromatin-remodeling complexes SWI/SNF: SWI/SNF-A (BAF), SWI/SNF-B (PBAF) and related complexes. The canonical complex contains a catalytic subunit (either SMARCA4/BRG1/BAF190A or SMARCA2/BRM/BAF190B) and at least SMARCE1, ACTL6A/BAF53, SMARCC1/BAF155, SMARCC2/BAF170, and SMARCB1/SNF5/BAF47. Other subunits specific to each of the complexes may also be present permitting several possible combinations developmentally and tissue specific. Component of the BAF complex, which includes at least actin (ACTB), ARID1A/BAF250A, ARID1B/BAF250B, SMARCA2/BRM, SMARCA4/BRG1, ACTL6A/BAF53, ACTL6B/BAF53B, SMARCE1/BAF57, SMARCC1/BAF155, SMARCC2/BAF170, SMARCB1/SNF5/INI1, and one or more SMARCD1/BAF60A, SMARCD2/BAF60B, or SMARCD3/BAF60C. In muscle cells, the BAF complex also contains DPF3. Component of neural progenitors-specific chromatin remodeling complex (npBAF complex) composed of at least, ARID1A/BAF250A or ARID1B/BAF250B, SMARCD1/BAF60A, SMARCD3/BAF60C, SMARCA2/BRM/BAF190B, SMARCA4/BRG1/BAF190A, SMARCB1/BAF47, SMARCC1/BAF155, SMARCE1/BAF57, SMARCC2/BAF170, PHF10/BAF45A, ACTL6A/BAF53A and actin. Component of neuron-specific chromatin remodeling complex (nBAF complex) composed of at least, ARID1A/BAF250A or ARID1B/BAF250B, SMARCD1/BAF60A, SMARCD3/BAF60C, SMARCA2/BRM/BAF190B, SMARCA4/BRG1/BAF190A, SMARCB1/BAF47, SMARCC1/BAF155, SMARCE1/BAF57, SMARCC2/BAF170, DPF1/BAF45B, DPF3/BAF45C, ACTL6B/BAF53B and actin. Component of the SWI/SNF-B (PBAF) chromatin remodeling complex, at least composed of SMARCA4/BRG1, SMARCB1/BAF47/SNF5, ACTL6A/BAF53A or ACTL6B/BAF53B, SMARCE1/BAF57, SMARCD1/BAF60A, SMARCD2/BAF60B, perhaps SMARCD3/BAF60C, SMARCC1/BAF155, SMARCC2/BAF170, PBRM1/BAF180, ARID2/BAF200 and actin. Component of SWI/SNF (GBAF) subcomplex, which includes at least BICRA or BICRAL (mutually exclusive), BRD9, SS18, SMARCA2/BRM, SMARCA4/BRG1/BAF190A, ACTL6A/BAF53, SMARCC1/BAF155, and SMARCD1/BAF60A. May also interact with the SIN3A histone deacetylase transcription repressor complex in conjunction with SMARCA2 and SMARCA4. The minimal complex composed of SMARCC1 and SMARCA4 seems to be able to associate with cyclin such as CCNE1 or transcription factors such as KLF1 or GATA1. Interacts with NR3C1 and SMARD1. Interacts with TRIP12; leading to disrupt interaction between TRIP12 and SMARCE1 and prevent SMARCE1 ubiquitination. Interacts with CEBPB (when not methylated). Interacts with KDM6B. Interacts with MKKS; the interaction takes place predominantly in the cytoplasm and may modulate SMARCC1 location. Interacts with DPF2. Interacts with PRDM1/BLIMP1. Interacts with DPF3a (isoform 2 of DPF3/BAF45C) and with HDGFL2 in a DPF3a-dependent manner. In terms of tissue distribution, highly expressed in adult brain, testis and thymus.

The protein localises to the nucleus. It localises to the cytoplasm. In terms of biological role, involved in transcriptional activation and repression of select genes by chromatin remodeling (alteration of DNA-nucleosome topology). Component of SWI/SNF chromatin remodeling complexes that carry out key enzymatic activities, changing chromatin structure by altering DNA-histone contacts within a nucleosome in an ATP-dependent manner. May stimulate the ATPase activity of the catalytic subunit of the complex. Belongs to the neural progenitors-specific chromatin remodeling complex (npBAF complex) and the neuron-specific chromatin remodeling complex (nBAF complex). During neural development a switch from a stem/progenitor to a postmitotic chromatin remodeling mechanism occurs as neurons exit the cell cycle and become committed to their adult state. The transition from proliferating neural stem/progenitor cells to postmitotic neurons requires a switch in subunit composition of the npBAF and nBAF complexes. As neural progenitors exit mitosis and differentiate into neurons, npBAF complexes which contain ACTL6A/BAF53A and PHF10/BAF45A, are exchanged for homologous alternative ACTL6B/BAF53B and DPF1/BAF45B or DPF3/BAF45C subunits in neuron-specific complexes (nBAF). The npBAF complex is essential for the self-renewal/proliferative capacity of the multipotent neural stem cells. The nBAF complex along with CREST plays a role regulating the activity of genes essential for dendrite growth. The protein is SWI/SNF complex subunit SMARCC1 (Smarcc1) of Mus musculus (Mouse).